We begin with the raw amino-acid sequence, 492 residues long: Stomatal closure-related actin-binding protein 2 (492 aa).

A coiled-coil region spans residues 112 to 132 (LKKLRDALETMRGRMDGRNRE).

This sequence belongs to the SCAB family. As to expression, expressed in roots, stems, leaves, siliques and flowers.

The protein localises to the cytoplasm. It localises to the cytoskeleton. Functionally, probable plant-specific actin binding protein that bundles and stabilizes microfilaments (MFs). The protein is Stomatal closure-related actin-binding protein 2 of Arabidopsis thaliana (Mouse-ear cress).